Here is an 82-residue protein sequence, read N- to C-terminus: Progonadoliberin-3 (82 aa).

A signal peptide spans 1–23 (MDLSNRTVVQVVVLALVAQVTLS). At glutamine 24 the chain carries Pyrrolidone carboxylic acid. Residue glycine 33 is modified to Glycine amide.

It belongs to the GnRH family.

The protein resides in the secreted. Stimulates the secretion of gonadotropins. This is Progonadoliberin-3 (gnrh3) from Salmo trutta (Brown trout).